Here is an 833-residue protein sequence, read N- to C-terminus: Translation initiation factor IF-2 (833 aa).

The tr-type G domain occupies 331–501 (TRAPVVTVMG…LLIAEMQDLK (171 aa)). Residues 340 to 347 (GHVDHGKT) are G1. GTP is bound at residue 340 to 347 (GHVDHGKT). The segment at 365-369 (GITQH) is G2. Residues 387-390 (DTPG) form a G3 region. GTP contacts are provided by residues 387–391 (DTPGH) and 441–444 (NKID). Residues 441 to 444 (NKID) are G4. Positions 477-479 (SAL) are G5.

The protein belongs to the TRAFAC class translation factor GTPase superfamily. Classic translation factor GTPase family. IF-2 subfamily.

It localises to the cytoplasm. One of the essential components for the initiation of protein synthesis. Protects formylmethionyl-tRNA from spontaneous hydrolysis and promotes its binding to the 30S ribosomal subunits. Also involved in the hydrolysis of GTP during the formation of the 70S ribosomal complex. The chain is Translation initiation factor IF-2 from Rickettsia canadensis (strain McKiel).